The chain runs to 54 residues: Ovomucoid (54 aa).

The Kazal-like domain maps to 4 to 54; it reads VDCSDYPKPVCSLEDMPLCGSDSKTYSNKCNFCNAVVDSNGTLTLSHFGKC. 3 disulfides stabilise this stretch: Cys-6/Cys-36, Cys-14/Cys-33, and Cys-22/Cys-54. Asn-43 is a glycosylation site (N-linked (GlcNAc...) asparagine).

Its subcellular location is the secreted. The sequence is that of Ovomucoid from Vultur gryphus (Andean condor).